Here is a 278-residue protein sequence, read N- to C-terminus: HTH-type transcriptional activator RhaS (278 aa).

The 99-residue stretch at 174–272 folds into the HTH araC/xylS-type domain; sequence NQLLAWLEDH…DWSPRDIRQG (99 aa). DNA-binding regions (H-T-H motif) lie at residues 191-212 and 239-262; these read EEVAAQFSLSLRTLHRQLKQQT and VTDIAFRCGFGDSNHFSTLFRREF.

In terms of assembly, binds DNA as a dimer.

It is found in the cytoplasm. Functionally, activates expression of the rhaBAD and rhaT operons. This is HTH-type transcriptional activator RhaS from Klebsiella pneumoniae (strain 342).